The primary structure comprises 142 residues: Transcription antitermination protein NusB (142 aa).

This sequence belongs to the NusB family.

Functionally, involved in transcription antitermination. Required for transcription of ribosomal RNA (rRNA) genes. Binds specifically to the boxA antiterminator sequence of the ribosomal RNA (rrn) operons. In Actinobacillus succinogenes (strain ATCC 55618 / DSM 22257 / CCUG 43843 / 130Z), this protein is Transcription antitermination protein NusB.